Consider the following 126-residue polypeptide: Holo-[acyl-carrier-protein] synthase (126 aa).

Positions 9 and 58 each coordinate Mg(2+).

The protein belongs to the P-Pant transferase superfamily. AcpS family. Mg(2+) serves as cofactor.

It is found in the cytoplasm. The catalysed reaction is apo-[ACP] + CoA = holo-[ACP] + adenosine 3',5'-bisphosphate + H(+). Its function is as follows. Transfers the 4'-phosphopantetheine moiety from coenzyme A to a Ser of acyl-carrier-protein. This chain is Holo-[acyl-carrier-protein] synthase, found in Escherichia coli O17:K52:H18 (strain UMN026 / ExPEC).